We begin with the raw amino-acid sequence, 349 residues long: Biotin synthase (349 aa).

The 226-residue stretch at 70–295 folds into the Radical SAM core domain; it reads PEVEVEGIIS…RTMLRFAGGR (226 aa). Cysteine 85, cysteine 89, and cysteine 92 together coordinate [4Fe-4S] cluster. [2Fe-2S] cluster-binding residues include cysteine 128, cysteine 161, cysteine 220, and arginine 290.

The protein belongs to the radical SAM superfamily. Biotin synthase family. In terms of assembly, homodimer. Requires [4Fe-4S] cluster as cofactor. It depends on [2Fe-2S] cluster as a cofactor.

The enzyme catalyses (4R,5S)-dethiobiotin + (sulfur carrier)-SH + 2 reduced [2Fe-2S]-[ferredoxin] + 2 S-adenosyl-L-methionine = (sulfur carrier)-H + biotin + 2 5'-deoxyadenosine + 2 L-methionine + 2 oxidized [2Fe-2S]-[ferredoxin]. It functions in the pathway cofactor biosynthesis; biotin biosynthesis; biotin from 7,8-diaminononanoate: step 2/2. In terms of biological role, catalyzes the conversion of dethiobiotin (DTB) to biotin by the insertion of a sulfur atom into dethiobiotin via a radical-based mechanism. In Mycobacterium bovis (strain ATCC BAA-935 / AF2122/97), this protein is Biotin synthase.